Here is a 125-residue protein sequence, read N- to C-terminus: Napin-3 (125 aa).

Intrachain disulfides connect Cys-10-Cys-62, Cys-23-Cys-51, Cys-52-Cys-107, and Cys-64-Cys-115.

Belongs to the 2S seed storage albumins family. In terms of assembly, the mature protein consists of a small and a large chain linked by disulfide bonds.

Functionally, the small, basic, water-soluble napins are one of the two major kinds of storage proteins synthesized in the seed during its maturation. This is Napin-3 from Brassica napus (Rape).